A 177-amino-acid polypeptide reads, in one-letter code: Shikimate kinase (177 aa).

17–22 (GVGKTT) is a binding site for ATP. Residue threonine 21 coordinates Mg(2+). Aspartate 39, arginine 63, and glycine 86 together coordinate substrate. Arginine 125 is a binding site for ATP. Arginine 143 contacts substrate. Residue arginine 159 participates in ATP binding.

This sequence belongs to the shikimate kinase family. In terms of assembly, monomer. Requires Mg(2+) as cofactor.

The protein localises to the cytoplasm. The enzyme catalyses shikimate + ATP = 3-phosphoshikimate + ADP + H(+). It functions in the pathway metabolic intermediate biosynthesis; chorismate biosynthesis; chorismate from D-erythrose 4-phosphate and phosphoenolpyruvate: step 5/7. Catalyzes the specific phosphorylation of the 3-hydroxyl group of shikimic acid using ATP as a cosubstrate. The protein is Shikimate kinase of Bacillus licheniformis (strain ATCC 14580 / DSM 13 / JCM 2505 / CCUG 7422 / NBRC 12200 / NCIMB 9375 / NCTC 10341 / NRRL NRS-1264 / Gibson 46).